The sequence spans 586 residues: Arginine--tRNA ligase (586 aa).

The 'HIGH' region signature appears at Ala-128–His-138.

This sequence belongs to the class-I aminoacyl-tRNA synthetase family. Monomer.

It localises to the cytoplasm. It catalyses the reaction tRNA(Arg) + L-arginine + ATP = L-arginyl-tRNA(Arg) + AMP + diphosphate. The sequence is that of Arginine--tRNA ligase from Coxiella burnetii (strain RSA 331 / Henzerling II).